A 201-amino-acid polypeptide reads, in one-letter code: Bradykinin potentiating and C-type natriuretic peptides (201 aa).

Residues 1 to 23 (MFVSRLAASGLLLLALLAVSLDG) form the signal peptide. A propeptide spanning residues 24–47 (KPVQQWSQNWPGPKVPPLVVQQWS) is cleaved from the precursor. At Gln48 the chain carries Pyrrolidone carboxylic acid. The propeptide occupies 58 to 60 (LVV). Position 61 is a pyrrolidone carboxylic acid (Gln61). Propeptides lie at residues 67–95 (TQLQ…AALD) and 107–179 (GSKA…LAKK). Positions 90-172 (PDAALDTPPA…GGGGGGGARR (83 aa)) are disordered. The span at 120–130 (SKGASATSTAS) shows a compositional bias: low complexity. A compositionally biased stretch (basic and acidic residues) spans 132 to 142 (PMRDLRTDGKQ). Positions 159–170 (PGGGGGGGGGGA) are enriched in gly residues. A disulfide bridge connects residues Cys185 and Cys201.

The protein in the N-terminal section; belongs to the bradykinin-potentiating peptide family. This sequence in the central section; belongs to the bradykinin inhibitor peptide family. In the C-terminal section; belongs to the natriuretic peptide family. As to expression, venom gland.

It localises to the secreted. Inhibits the activity of the angiotensin-converting enzyme (ACE) by a preferential interaction with its C-domain. May also potentiate the hypotensive effects of bradykinin. In terms of biological role, antagonizes the vasodilatory actions of bradykinin at the B2 bradykinin receptor. Functionally, has a vasorelaxant activity in rat aortic strips and a diuretic potency in anesthetized rats. May act by activating natriuretic receptors (NPR1 and/or NPR2). The polypeptide is Bradykinin potentiating and C-type natriuretic peptides (Sistrurus catenatus edwardsii (Desert massasauga)).